A 200-amino-acid chain; its full sequence is Recombination protein RecR (200 aa).

A C4-type zinc finger spans residues 57–72 (CSECRTFTEEDTCAIC). In terms of domain architecture, Toprim spans 81–176 (GELCIVESPA…SASRIAHGVP (96 aa)).

This sequence belongs to the RecR family.

In terms of biological role, may play a role in DNA repair. It seems to be involved in an RecBC-independent recombinational process of DNA repair. It may act with RecF and RecO. The chain is Recombination protein RecR from Aliivibrio salmonicida (strain LFI1238) (Vibrio salmonicida (strain LFI1238)).